The primary structure comprises 502 residues: ATP synthase subunit beta (502 aa).

153–160 (GGAGVGKT) contributes to the ATP binding site.

The protein belongs to the ATPase alpha/beta chains family. In terms of assembly, F-type ATPases have 2 components, CF(1) - the catalytic core - and CF(0) - the membrane proton channel. CF(1) has five subunits: alpha(3), beta(3), gamma(1), delta(1), epsilon(1). CF(0) has three main subunits: a(1), b(2) and c(9-12). The alpha and beta chains form an alternating ring which encloses part of the gamma chain. CF(1) is attached to CF(0) by a central stalk formed by the gamma and epsilon chains, while a peripheral stalk is formed by the delta and b chains.

It localises to the cell membrane. The catalysed reaction is ATP + H2O + 4 H(+)(in) = ADP + phosphate + 5 H(+)(out). Its function is as follows. Produces ATP from ADP in the presence of a proton gradient across the membrane. The catalytic sites are hosted primarily by the beta subunits. The sequence is that of ATP synthase subunit beta from Amoebophilus asiaticus (strain 5a2).